A 242-amino-acid chain; its full sequence is DNA repair protein RecO (242 aa).

Belongs to the RecO family.

Its function is as follows. Involved in DNA repair and RecF pathway recombination. The protein is DNA repair protein RecO of Dechloromonas aromatica (strain RCB).